Reading from the N-terminus, the 160-residue chain is Protein-export protein SecB (160 aa).

It belongs to the SecB family. As to quaternary structure, homotetramer, a dimer of dimers. One homotetramer interacts with 1 SecA dimer.

The protein localises to the cytoplasm. Functionally, one of the proteins required for the normal export of preproteins out of the cell cytoplasm. It is a molecular chaperone that binds to a subset of precursor proteins, maintaining them in a translocation-competent state. It also specifically binds to its receptor SecA. This Aliivibrio salmonicida (strain LFI1238) (Vibrio salmonicida (strain LFI1238)) protein is Protein-export protein SecB.